The following is a 177-amino-acid chain: Large ribosomal subunit protein uL6 (177 aa).

The protein belongs to the universal ribosomal protein uL6 family. In terms of assembly, part of the 50S ribosomal subunit.

Its function is as follows. This protein binds to the 23S rRNA, and is important in its secondary structure. It is located near the subunit interface in the base of the L7/L12 stalk, and near the tRNA binding site of the peptidyltransferase center. In Natronomonas pharaonis (strain ATCC 35678 / DSM 2160 / CIP 103997 / JCM 8858 / NBRC 14720 / NCIMB 2260 / Gabara) (Halobacterium pharaonis), this protein is Large ribosomal subunit protein uL6.